The following is a 68-amino-acid chain: Agnoprotein (68 aa).

Residues 1–24 are Cytoplasmic-facing; that stretch reads MVLRQLSRQASVKVGKTWTGTKRR. Phosphoserine; by host is present on residues Ser7 and Ser11. Position 21 is a phosphothreonine; by host (Thr21). The chain crosses the membrane as a helical; Signal-anchor for type II membrane protein span at residues 25–41; that stretch reads AQRIFIFILELLLDFCR. Over 42–68 the chain is Extracellular; the sequence is GEDSVDGKKKKDSLTDKTETVTEKKES. The interval 44 to 68 is disordered; it reads DSVDGKKKKDSLTDKTETVTEKKES.

It belongs to the polyomavirus agnoprotein family. As to quaternary structure, homooligomer. Interacts with VP1. Interacts with large T antigen; this interaction may impact upon the activity of T-antigen on the control of viral gene transcription and replication. Interacts with small t antigen. Interacts with host CBX5; this interaction induces the dissociation of CBX5 from LBR, resulting in destabilization of the nuclear envelope. Phosphorylated by host PKC. Phosphorylation alters the stability and may also have an impact on the subcellular location.

It is found in the host cytoplasm. Its subcellular location is the host nucleus membrane. The protein resides in the host rough endoplasmic reticulum membrane. It localises to the host cell membrane. Alters the structure of the nuclear envelope by interacting with host CBX5 and disrupting CBX5 association with LBR. Involved in the perinuclear-nuclear localization of the capsid protein VP1 during virion assembly and maturation. Plays an important role in the release of progeny virions from infected cells and in viral propagation, probably by acting as a viral ionic channel in the host plasma membrane. Allows influx of extracellular calcium ions in the host cell. May contribute to viral genome transcription and translation of viral late proteins. The polypeptide is Agnoprotein (Simian virus 12 (strain wt100) (SV-12)).